The sequence spans 479 residues: Sulfate adenylyltransferase subunit 1 (479 aa).

A tr-type G domain is found at 25–239 (KSLLRFLTCG…EVLETVDIQR (215 aa)). The tract at residues 34 to 41 (GSVDDGKS) is G1. A GTP-binding site is contributed by 34–41 (GSVDDGKS). A G2 region spans residues 92–96 (GITID). The tract at residues 113–116 (DTPG) is G3. Residues 113–117 (DTPGH) and 168–171 (NKMD) contribute to the GTP site. The tract at residues 168–171 (NKMD) is G4. Residues 206–208 (SAL) are G5.

This sequence belongs to the TRAFAC class translation factor GTPase superfamily. Classic translation factor GTPase family. CysN/NodQ subfamily. Heterodimer composed of CysD, the smaller subunit, and CysN.

It catalyses the reaction sulfate + ATP + H(+) = adenosine 5'-phosphosulfate + diphosphate. Its pathway is sulfur metabolism; hydrogen sulfide biosynthesis; sulfite from sulfate: step 1/3. Functionally, with CysD forms the ATP sulfurylase (ATPS) that catalyzes the adenylation of sulfate producing adenosine 5'-phosphosulfate (APS) and diphosphate, the first enzymatic step in sulfur assimilation pathway. APS synthesis involves the formation of a high-energy phosphoric-sulfuric acid anhydride bond driven by GTP hydrolysis by CysN coupled to ATP hydrolysis by CysD. The polypeptide is Sulfate adenylyltransferase subunit 1 (Salmonella typhimurium (strain LT2 / SGSC1412 / ATCC 700720)).